The sequence spans 168 residues: Protein DESIGUAL 2 (168 aa).

An N-terminal signal peptide occupies residues 1–20 (MARNVGFFICILILAMDVSA). Helical transmembrane passes span 56-76 (LAAC…GGCL), 94-114 (AVAS…MLIV), and 133-153 (VLSI…AYYI).

This sequence belongs to the DESIGUAL family. As to expression, mainly expressed in roots, inflorescences and developing leaves, and, at low levels, in mature leaves.

It localises to the endoplasmic reticulum membrane. Functionally, involved, partially redundantly with VCC/DEAL1 and DEAL3, to ensure bilateral symmetry development and early leaf margin patterning, probably via the regulation of auxin and CUC2 distribution. This chain is Protein DESIGUAL 2, found in Arabidopsis thaliana (Mouse-ear cress).